The primary structure comprises 647 residues: LIM domain kinase 1 (647 aa).

LIM zinc-binding domains follow at residues 25-75 (CASC…CKKD) and 84-137 (CHGC…CGHC). The 94-residue stretch at 165–258 (LVSIPASSHG…LLQLTLEHDP (94 aa)) folds into the PDZ domain. Residue Ser210 is modified to Phosphoserine. Thr229 carries the post-translational modification Phosphothreonine. The tract at residues 260-319 (DTLGHGLGPETSPLSSPAYTPSGEAGSSARQKPVLRSCSIDRSPGAGSLGSPASQRKDLG) is disordered. A phosphoserine mark is found at Ser298, Ser302, Ser307, and Ser310. Low complexity predominate over residues 302 to 313 (SPGAGSLGSPAS). Residue Ser323 is modified to Phosphoserine; by MAPKAPK2. Phosphoserine is present on Ser337. One can recognise a Protein kinase domain in the interval 339–604 (LIHGEVLGKG…PSFVKLEHWL (266 aa)). ATP is bound by residues 345-353 (LGKGCFGQA) and Lys368. Asp460 is a catalytic residue. Residue Thr508 is modified to Phosphothreonine; by ROCK1 and PAK1.

Belongs to the protein kinase superfamily. TKL Ser/Thr protein kinase family. In terms of assembly, interacts (via LIM domain) with the cytoplasmic domain of NRG1. Interacts with NISCH. Interacts with RLIM and RNF6. Self-associates to form homodimers. Interacts with HSP90AA1; this interaction promotes LIMK1 dimerization and subsequent transphosphorylation. Interacts with CDKN1C. Interacts with SSH1. Interacts with ROCK1. Interacts (via LIM zinc-binding domains) with FAM89B/LRAP25 (via LRR repeat). Forms a tripartite complex with CDC42BPA, CDC42BPB and FAM89B/LRAP25. In terms of processing, autophosphorylated. Phosphorylated on Thr-508 by ROCK1 and PAK1, resulting in activation. Phosphorylated by PAK4 which increases the ability of LIMK1 to phosphorylate cofilin. Phosphorylated at Ser-323 by MAPKAPK2 during activation of VEGFA-induced signaling, which results in activation of LIMK1 and promotion of actin reorganization, cell migration, and tubule formation of endothelial cells. Dephosphorylated and inactivated by SSH1. Phosphorylated by CDC42BP. Post-translationally, ubiquitinated. 'Lys-48'-linked polyubiquitination by RNF6 leads to proteasomal degradation through the 26S proteasome, modulating LIMK1 levels in the growth cone and its effect on axonal outgrowth. Also polyubiquitinated by RLIM. In terms of tissue distribution, highest expression in both adult and fetal nervous system. Detected ubiquitously throughout the different regions of adult brain, with highest levels in the cerebral cortex. Expressed to a lesser extent in heart and skeletal muscle.

It localises to the cytoplasm. The protein resides in the nucleus. Its subcellular location is the cytoskeleton. It is found in the cell projection. The protein localises to the lamellipodium. The catalysed reaction is L-seryl-[protein] + ATP = O-phospho-L-seryl-[protein] + ADP + H(+). It catalyses the reaction L-threonyl-[protein] + ATP = O-phospho-L-threonyl-[protein] + ADP + H(+). Serine/threonine-protein kinase that plays an essential role in the regulation of actin filament dynamics. Acts downstream of several Rho family GTPase signal transduction pathways. Activated by upstream kinases including ROCK1, PAK1 and PAK4, which phosphorylate LIMK1 on a threonine residue located in its activation loop. LIMK1 subsequently phosphorylates and inactivates the actin binding/depolymerizing factors cofilin-1/CFL1, cofilin-2/CFL2 and destrin/DSTN, thereby preventing the cleavage of filamentous actin (F-actin), and stabilizing the actin cytoskeleton. In this way LIMK1 regulates several actin-dependent biological processes including cell motility, cell cycle progression, and differentiation. Phosphorylates TPPP on serine residues, thereby promoting microtubule disassembly. Stimulates axonal outgrowth and may be involved in brain development. Functionally, has a dominant negative effect on actin cytoskeletal changes. Required for atypical chemokine receptor ACKR2-induced phosphorylation of cofilin (CFL1). The sequence is that of LIM domain kinase 1 (LIMK1) from Homo sapiens (Human).